We begin with the raw amino-acid sequence, 124 residues long: Large ribosomal subunit protein eL31 (124 aa).

Tyr102 carries the phosphotyrosine modification.

It belongs to the eukaryotic ribosomal protein eL31 family.

This Drosophila melanogaster (Fruit fly) protein is Large ribosomal subunit protein eL31 (RpL31).